Here is a 445-residue protein sequence, read N- to C-terminus: Tubulin beta chain (445 aa).

Residues 1–4 (MREI) carry the MREI motif motif. Glutamine 11 is a GTP binding site. A Phosphoserine modification is found at serine 40. Lysine 58 carries the post-translational modification N6-acetyllysine; alternate. Lysine 58 carries the post-translational modification N6-succinyllysine; alternate. Lysine 58 is covalently cross-linked (Glycyl lysine isopeptide (Lys-Gly) (interchain with G-Cter in ubiquitin); alternate). Glutamate 69, serine 138, glycine 142, threonine 143, and glycine 144 together coordinate GTP. Glutamate 69 provides a ligand contact to Mg(2+). A Phosphoserine; by CDK1 modification is found at serine 172. Positions 204 and 226 each coordinate GTP. Phosphothreonine is present on residues threonine 285 and threonine 290. Position 318 is an omega-N-methylarginine (arginine 318). Lysine 324 is covalently cross-linked (Glycyl lysine isopeptide (Lys-Gly) (interchain with G-Cter in ubiquitin)). The segment at 424 to 445 (QYQDATADEQGEFEEEGEEDEA) is disordered. Residues 429 to 445 (TADEQGEFEEEGEEDEA) are compositionally biased toward acidic residues. Glutamate 438 is subject to 5-glutamyl polyglutamate.

This sequence belongs to the tubulin family. As to quaternary structure, dimer of alpha and beta chains. A typical microtubule is a hollow water-filled tube with an outer diameter of 25 nm and an inner diameter of 15 nM. Alpha-beta heterodimers associate head-to-tail to form protofilaments running lengthwise along the microtubule wall with the beta-tubulin subunit facing the microtubule plus end conferring a structural polarity. Microtubules usually have 13 protofilaments but different protofilament numbers can be found in some organisms and specialized cells. Interacts with NCKAP5L. Mg(2+) is required as a cofactor. Some glutamate residues at the C-terminus are polyglycylated, resulting in polyglycine chains on the gamma-carboxyl group. Glycylation is mainly limited to tubulin incorporated into axonemes (cilia and flagella) whereas glutamylation is prevalent in neuronal cells, centrioles, axonemes, and the mitotic spindle. Both modifications can coexist on the same protein on adjacent residues, and lowering polyglycylation levels increases polyglutamylation, and reciprocally. Cilia and flagella glycylation is required for their stability and maintenance. Flagella glycylation controls sperm motility. Post-translationally, some glutamate residues at the C-terminus are polyglutamylated, resulting in polyglutamate chains on the gamma-carboxyl group. Polyglutamylation plays a key role in microtubule severing by spastin (SPAST). SPAST preferentially recognizes and acts on microtubules decorated with short polyglutamate tails: severing activity by SPAST increases as the number of glutamates per tubulin rises from one to eight, but decreases beyond this glutamylation threshold. In terms of processing, phosphorylated on Ser-172 by CDK1 during the cell cycle, from metaphase to telophase, but not in interphase. This phosphorylation inhibits tubulin incorporation into microtubules.

It is found in the cytoplasm. The protein resides in the cytoskeleton. In terms of biological role, tubulin is the major constituent of microtubules, a cylinder consisting of laterally associated linear protofilaments composed of alpha- and beta-tubulin heterodimers. Microtubules grow by the addition of GTP-tubulin dimers to the microtubule end, where a stabilizing cap forms. Below the cap, tubulin dimers are in GDP-bound state, owing to GTPase activity of alpha-tubulin. The chain is Tubulin beta chain from Sus scrofa (Pig).